Reading from the N-terminus, the 55-residue chain is MPQLNPNPWFFIMIMSWAVFLLLIQPKLLSFTHTNLPSNKPLSTPNPTPWTWPWT.

Residues 9 to 29 form a helical membrane-spanning segment; the sequence is WFFIMIMSWAVFLLLIQPKLL.

The protein belongs to the ATPase protein 8 family. Component of the ATP synthase complex composed at least of ATP5F1A/subunit alpha, ATP5F1B/subunit beta, ATP5MC1/subunit c (homooctomer), MT-ATP6/subunit a, MT-ATP8/subunit 8, ATP5ME/subunit e, ATP5MF/subunit f, ATP5MG/subunit g, ATP5MK/subunit k, ATP5MJ/subunit j, ATP5F1C/subunit gamma, ATP5F1D/subunit delta, ATP5F1E/subunit epsilon, ATP5PF/subunit F6, ATP5PB/subunit b, ATP5PD/subunit d, ATP5PO/subunit OSCP. ATP synthase complex consists of a soluble F(1) head domain (subunits alpha(3) and beta(3)) - the catalytic core - and a membrane F(0) domain - the membrane proton channel (subunits c, a, 8, e, f, g, k and j). These two domains are linked by a central stalk (subunits gamma, delta, and epsilon) rotating inside the F1 region and a stationary peripheral stalk (subunits F6, b, d, and OSCP).

It is found in the mitochondrion membrane. Functionally, subunit 8, of the mitochondrial membrane ATP synthase complex (F(1)F(0) ATP synthase or Complex V) that produces ATP from ADP in the presence of a proton gradient across the membrane which is generated by electron transport complexes of the respiratory chain. ATP synthase complex consist of a soluble F(1) head domain - the catalytic core - and a membrane F(1) domain - the membrane proton channel. These two domains are linked by a central stalk rotating inside the F(1) region and a stationary peripheral stalk. During catalysis, ATP synthesis in the catalytic domain of F(1) is coupled via a rotary mechanism of the central stalk subunits to proton translocation. In vivo, can only synthesize ATP although its ATP hydrolase activity can be activated artificially in vitro. Part of the complex F(0) domain. This is ATP synthase F(0) complex subunit 8 from Rhea americana (Greater rhea).